Here is a 560-residue protein sequence, read N- to C-terminus: Secreted RxLR effector protein 142 (560 aa).

The first 22 residues, 1-22 (MRRAYFVAIALLVAAGGKTAAG), serve as a signal peptide directing secretion. Disordered regions lie at residues 48–73 (QSQN…ERTP) and 354–377 (INRP…LNNQ). The span at 54–72 (ESRDPKDDLKLSAGNEERT) shows a compositional bias: basic and acidic residues. The RxLR-dEER motif lies at 56-71 (RDPKDDLKLSAGNEER). The segment covering 361–377 (GPSTNGATTSNGGLNNQ) has biased composition (polar residues).

This sequence belongs to the RxLR effector family.

The protein resides in the secreted. Its subcellular location is the host nucleus. Its function is as follows. Secreted effector that completely suppresses the host cell death induced by cell death-inducing proteins. The chain is Secreted RxLR effector protein 142 from Plasmopara viticola (Downy mildew of grapevine).